Consider the following 372-residue polypeptide: Solute carrier family 35 member F6 (372 aa).

Positions 1–18 (MAWTKYQLFLAGLMLVTG) are cleaved as a signal peptide. The next 2 helical transmembrane spans lie at 48–68 (FVQAVGMFLGEFSCLAAFYLL) and 89–109 (LLFLPPALCDMTGTSIMYVAL). Positions 105-160 (MYVALNMTSASSFQMLRGAVIIFTGLFSVAFLDRRLAPSQWLGILITIAGLVVVGL) constitute an EamA domain. An N-linked (GlcNAc...) asparagine glycan is attached at asparagine 110. Helical transmembrane passes span 116–136 (SFQMLRGAVIIFTGLFSVAFL), 145–165 (WLGILITIAGLVVVGLADLLS), 176–196 (VITGDLLIIMAQIIIAIQMVL), 211–231 (AVGIEGFFGFVILSLLLVPMF), 261–281 (LIALALLGNISSIAFFNFSGI), 293–312 (MVLDTLRTIVIWAFTLALGW), and 320–336 (ILGFLILLMGTALYNGL). Threonine 366 is subject to Phosphothreonine.

It belongs to the SLC35F solute transporter family. Interacts with SLC25A5.

It localises to the mitochondrion. The protein resides in the lysosome membrane. Functionally, involved in the maintenance of mitochondrial membrane potential in pancreatic ductal adenocarcinoma (PDAC) cells. Promotes pancreatic ductal adenocarcinoma (PDAC) cell growth. May play a role as a nucleotide-sugar transporter. This chain is Solute carrier family 35 member F6 (Slc35f6), found in Mus musculus (Mouse).